Here is a 279-residue protein sequence, read N- to C-terminus: Acetyl-coenzyme A carboxylase carboxyl transferase subunit beta (279 aa).

The 257-residue stretch at 23 to 279 (LWWKCEECGA…LVTLFSMLKV (257 aa)) folds into the CoA carboxyltransferase N-terminal domain. Zn(2+)-binding residues include Cys27, Cys30, Cys46, and Cys49. The segment at 27–49 (CEECGAMLHKKQFEDHFFTCAEC) adopts a C4-type zinc-finger fold.

It belongs to the AccD/PCCB family. In terms of assembly, acetyl-CoA carboxylase is a heterohexamer composed of biotin carboxyl carrier protein (AccB), biotin carboxylase (AccC) and two subunits each of ACCase subunit alpha (AccA) and ACCase subunit beta (AccD). Requires Zn(2+) as cofactor.

Its subcellular location is the cytoplasm. It carries out the reaction N(6)-carboxybiotinyl-L-lysyl-[protein] + acetyl-CoA = N(6)-biotinyl-L-lysyl-[protein] + malonyl-CoA. Its pathway is lipid metabolism; malonyl-CoA biosynthesis; malonyl-CoA from acetyl-CoA: step 1/1. Functionally, component of the acetyl coenzyme A carboxylase (ACC) complex. Biotin carboxylase (BC) catalyzes the carboxylation of biotin on its carrier protein (BCCP) and then the CO(2) group is transferred by the transcarboxylase to acetyl-CoA to form malonyl-CoA. The chain is Acetyl-coenzyme A carboxylase carboxyl transferase subunit beta from Pelodictyon phaeoclathratiforme (strain DSM 5477 / BU-1).